A 378-amino-acid polypeptide reads, in one-letter code: Phospho-N-acetylmuramoyl-pentapeptide-transferase (378 aa).

10 helical membrane passes run 27-47, 74-94, 96-116, 135-155, 184-204, 216-236, 256-276, 280-300, 305-325, and 355-375; these read TAFASLTALFLCIALGPWLIN, TMGGVLIVISIVIPTLLWADL, YPYVWIALAGLLGYGWIGFLD, LVYQFIMGFAFAASLLVMRAY, WTYVIGVAPFCIFVALVVVFY, GLAIGLMVIAAGALTVLAYAG, LTIFCGSMTGASLGFLWYNAH, IFMGDVGSLGLGGAMAVVAVL, ILLLFIGGIFVLEAFSVILQV, and KIIARFWIAGLVLALFALTTL.

This sequence belongs to the glycosyltransferase 4 family. MraY subfamily. It depends on Mg(2+) as a cofactor.

The protein localises to the cell inner membrane. The enzyme catalyses UDP-N-acetyl-alpha-D-muramoyl-L-alanyl-gamma-D-glutamyl-meso-2,6-diaminopimeloyl-D-alanyl-D-alanine + di-trans,octa-cis-undecaprenyl phosphate = di-trans,octa-cis-undecaprenyl diphospho-N-acetyl-alpha-D-muramoyl-L-alanyl-D-glutamyl-meso-2,6-diaminopimeloyl-D-alanyl-D-alanine + UMP. The protein operates within cell wall biogenesis; peptidoglycan biosynthesis. Functionally, catalyzes the initial step of the lipid cycle reactions in the biosynthesis of the cell wall peptidoglycan: transfers peptidoglycan precursor phospho-MurNAc-pentapeptide from UDP-MurNAc-pentapeptide onto the lipid carrier undecaprenyl phosphate, yielding undecaprenyl-pyrophosphoryl-MurNAc-pentapeptide, known as lipid I. The sequence is that of Phospho-N-acetylmuramoyl-pentapeptide-transferase from Solibacter usitatus (strain Ellin6076).